Reading from the N-terminus, the 40-residue chain is MTNTTGRVPLWLVGTVAGTLVIGLLGVFFYGAYSGLGSSL.

The helical transmembrane segment at 10 to 30 (LWLVGTVAGTLVIGLLGVFFY) threads the bilayer.

Belongs to the PsbJ family. PSII is composed of 1 copy each of membrane proteins PsbA, PsbB, PsbC, PsbD, PsbE, PsbF, PsbH, PsbI, PsbJ, PsbK, PsbL, PsbM, PsbT, PsbX, PsbY, PsbZ, Psb30/Ycf12, at least 3 peripheral proteins of the oxygen-evolving complex and a large number of cofactors. It forms dimeric complexes.

The protein resides in the plastid. The protein localises to the chloroplast thylakoid membrane. Functionally, one of the components of the core complex of photosystem II (PSII). PSII is a light-driven water:plastoquinone oxidoreductase that uses light energy to abstract electrons from H(2)O, generating O(2) and a proton gradient subsequently used for ATP formation. It consists of a core antenna complex that captures photons, and an electron transfer chain that converts photonic excitation into a charge separation. This is Photosystem II reaction center protein J from Adiantum capillus-veneris (Maidenhair fern).